The following is a 131-amino-acid chain: Small ribosomal subunit protein uS11 (131 aa).

The protein belongs to the universal ribosomal protein uS11 family. As to quaternary structure, part of the 30S ribosomal subunit. Interacts with proteins S7 and S18. Binds to IF-3.

Functionally, located on the platform of the 30S subunit, it bridges several disparate RNA helices of the 16S rRNA. Forms part of the Shine-Dalgarno cleft in the 70S ribosome. The chain is Small ribosomal subunit protein uS11 from Helicobacter pylori (strain P12).